Here is a 154-residue protein sequence, read N- to C-terminus: Superoxide dismutase [Cu-Zn] (154 aa).

Cu cation-binding residues include histidine 45, histidine 47, and histidine 62. Cysteine 56 and cysteine 146 form a disulfide bridge. Residues histidine 62, histidine 70, histidine 79, and aspartate 82 each contribute to the Zn(2+) site. A Cu cation-binding site is contributed by histidine 120.

The protein belongs to the Cu-Zn superoxide dismutase family. In terms of assembly, homodimer. Requires Cu cation as cofactor. Zn(2+) is required as a cofactor.

The protein localises to the cytoplasm. It catalyses the reaction 2 superoxide + 2 H(+) = H2O2 + O2. Functionally, destroys radicals which are normally produced within the cells and which are toxic to biological systems. The protein is Superoxide dismutase [Cu-Zn] of Bombyx mori (Silk moth).